The following is a 537-amino-acid chain: Frizzled-4 (537 aa).

The signal sequence occupies residues 1–36 (MAWPGTGPSSRGAPGGVGLRLGLLLQFLLLLRPTLG). The Extracellular segment spans residues 37 to 212 (FGDEEERRCD…KCGYDAGLYS (176 aa)). The region spanning 40–161 (EEERRCDPIR…NDHNHMCMEG (122 aa)) is the FZ domain. Intrachain disulfides connect cysteine 45/cysteine 106, cysteine 53/cysteine 99, cysteine 90/cysteine 128, cysteine 117/cysteine 158, cysteine 121/cysteine 145, cysteine 181/cysteine 200, cysteine 204/cysteine 282, and cysteine 302/cysteine 377. Asparagine 59 carries an N-linked (GlcNAc...) asparagine glycan. Asparagine 144 is a glycosylation site (N-linked (GlcNAc...) asparagine). A helical membrane pass occupies residues 213 to 243 (RSAKEFTDIWMAVWASLCFISTTFTVLTFLI). The Cytoplasmic segment spans residues 244-249 (DSSRFS). A helical membrane pass occupies residues 250–275 (YPERPIIFLSMCYNIYSIAYIVRLTV). The Extracellular portion of the chain corresponds to 276–299 (GRERISCDFEEAAEPVLIQEGLKN). The helical transmembrane segment at 300–333 (TGCAIIFLLMYFFGMASSIWWVILTLTWFLAAGL) threads the bilayer. Residues 334–336 (KWG) are Cytoplasmic-facing. The helical transmembrane segment at 337–365 (HEAIEMHSSYFHIAAWAIPAVKTIVILIM) threads the bilayer. Residues 366-383 (RLVDADELTGLCYVGNQN) lie on the Extracellular side of the membrane. A helical transmembrane segment spans residues 384–410 (LDALTGFVVAPLFTYLVIGTLFIAAGL). Residues 411-431 (VALFKIRSNLQKDGTKTDKLE) are Cytoplasmic-facing. A helical transmembrane segment spans residues 432-460 (RLMVKIGVFSVLYTVPATCVIACYFYEIS). Residues 461-473 (NWALFRYSADDSN) lie on the Extracellular side of the membrane. Residues 474–495 (MAVEMLKIFMSLLVGITSGMWI) form a helical membrane-spanning segment. At 496–537 (WSAKTLHTWQKCSNRLVNSGKVKREKRGNGWVKPGKGNETVV) the chain is on the cytoplasmic side. A Lys-Thr-X-X-X-Trp motif, mediates interaction with the PDZ domain of Dvl family members motif is present at residues 499–504 (KTLHTW). The PDZ-binding signature appears at 535 to 537 (TVV).

It belongs to the G-protein coupled receptor Fz/Smo family. In terms of assembly, interacts with MAGI3 and NDP. Component of a complex, at least composed of TSPAN12, FZD4 and norrin (NDP). Interacts (via FZ domain) with TSKU; TSKU competes with WNT2B for binding to FZD4, inhibiting Wnt signaling and repressing peripheral eye development. Interacts with glypican GPC3. Ubiquitinated by ZNRF3, leading to its degradation by the proteasome. In terms of tissue distribution, expressed in chondrocytes.

It is found in the cell membrane. Receptor for Wnt proteins. Most frizzled receptors are coupled to the beta-catenin (CTNNB1) canonical signaling pathway, which leads to the activation of disheveled proteins, inhibition of GSK-3 kinase, nuclear accumulation of beta-catenin (CTNNB1) and activation of Wnt target genes. Plays a critical role in retinal vascularization by acting as a receptor for Wnt proteins and norrin (NDP). In retina, it can be activated by Wnt protein-binding and also by Wnt-independent signaling via binding of norrin (NDP), promoting in both cases beta-catenin (CTNNB1) accumulation and stimulation of LEF/TCF-mediated transcriptional programs. A second signaling pathway involving PKC and calcium fluxes has been seen for some family members, but it is not yet clear if it represents a distinct pathway or if it can be integrated in the canonical pathway, as PKC seems to be required for Wnt-mediated inactivation of GSK-3 kinase. Both pathways seem to involve interactions with G-proteins. May be involved in transduction and intercellular transmission of polarity information during tissue morphogenesis and/or in differentiated tissues. Activation by Wnt5A stimulates PKC activity via a G-protein-dependent mechanism. The sequence is that of Frizzled-4 (Fzd4) from Mus musculus (Mouse).